Here is a 279-residue protein sequence, read N- to C-terminus: Elongation factor Ts (279 aa).

An involved in Mg(2+) ion dislocation from EF-Tu region spans residues 80-83 (TDFV).

This sequence belongs to the EF-Ts family.

It localises to the cytoplasm. Associates with the EF-Tu.GDP complex and induces the exchange of GDP to GTP. It remains bound to the aminoacyl-tRNA.EF-Tu.GTP complex up to the GTP hydrolysis stage on the ribosome. In Borreliella burgdorferi (strain ZS7) (Borrelia burgdorferi), this protein is Elongation factor Ts.